Reading from the N-terminus, the 104-residue chain is L-rhamnose mutarotase (104 aa).

Tyrosine 18 provides a ligand contact to substrate. Residue histidine 22 is the Proton donor of the active site. Substrate contacts are provided by residues tyrosine 41 and 76 to 77; that span reads WW.

Belongs to the rhamnose mutarotase family. In terms of assembly, homodimer.

It is found in the cytoplasm. It catalyses the reaction alpha-L-rhamnose = beta-L-rhamnose. It participates in carbohydrate metabolism; L-rhamnose metabolism. Its function is as follows. Involved in the anomeric conversion of L-rhamnose. The chain is L-rhamnose mutarotase from Burkholderia orbicola (strain MC0-3).